A 261-amino-acid chain; its full sequence is Putative [LysW]-aminoadipate/[LysW]-glutamate kinase (261 aa).

Substrate contacts are provided by residues 35 to 36, R62, and N162; that span reads GG.

Belongs to the acetylglutamate kinase family. LysZ subfamily.

The protein resides in the cytoplasm. It carries out the reaction [amino-group carrier protein]-C-terminal-N-(1,4-dicarboxybutan-1-yl)-L-glutamine + ATP = [amino-group carrier protein]-C-terminal-N-(1-carboxy-5-phosphooxy-5-oxopentan-1-yl)-L-glutamine + ADP. It catalyses the reaction [amino-group carrier protein]-C-terminal-gamma-(L-glutamyl)-L-glutamate + ATP = [amino-group carrier protein]-C-terminal-gamma-(5-phospho-L-glutamyl)-L-glutamate + ADP. It functions in the pathway amino-acid biosynthesis; L-lysine biosynthesis via AAA pathway; L-lysine from L-alpha-aminoadipate (Thermus route): step 2/5. It participates in amino-acid biosynthesis; L-arginine biosynthesis. Involved in both the arginine and lysine biosynthetic pathways. Phosphorylates the LysW-bound precursors glutamate (for arginine biosynthesis), respectively alpha-aminoadipate (for lysine biosynthesis). This chain is Putative [LysW]-aminoadipate/[LysW]-glutamate kinase, found in Pyrobaculum calidifontis (strain DSM 21063 / JCM 11548 / VA1).